The primary structure comprises 1297 residues: MATVYGIQLTNRLNTATVRRPLRLRRYDSCITTFTTPNGISQLYRALDFQPTSFQASILQTFPPLNAWSPSPQFVPDDLSLSQWKEWITERMRALATVLQRAHPLVANAGREVNPITIGLITSSFLNQRPIDGYLPFLFLARNARDPIAPLVTVDITFSDDTYVSRHVLYTPAGLKYLTLSSYDPTKPSSICTFGKHIPLYATAAFYPDETARLTILHRYNGGPPLIEHFDQPTYGPHVLIPALGSPEGYDTHLNICRLLLAEGLLDSFRLNASAGPSTAVARIDQTYHVVMNGSPDDHTQLATRLSNLSLLAVQGCQMTVQVADHPTMSDVGGFLVRLQGPGDPQRLIAYRTDQILIWQASPFPFGNNARYVRRPGRVPFTIGTTTYVPDTKTPLPFLPQYRQATVNKNNAQDSYELNVLPSLPIYSPFALTGGAFFQARDITGDPANVWPVNTLPGLPRDYFSIQSRQRRELLSRLRSHSDRSYVKDVHNISFASTVLNPVNNQIVLSEGFSMAYLGAASTHGTTDEPLIIEALKSGTVPGVPIPSKISQFGYDVANGSIMDATLAPPTGTFTFVYSDVDQVEDAGLSIVATNRAAVAVTNIALSMTTAGGLTVVKVNFPTPAFWTQLFRNHATDARALYILKPLIVNSVEVFLLFVSRATAGNLVSSPALRQFLVQLFDRSTSLSEVMAHVPLLGDVDTGVTTLGFNACRLYSPDLPTVNITPEIQTLAYQLATIVPSTSFIAREDYDGATAVTFYGKRTFLSRNRLDRLVDVPVPATNAINHQTRFTGSPVYQLFPTNPAPVTQLLWLARTTGLYTASWPRLLLSRWLICGTGPECRILSLMPPATSVTMIDSRPPAESLAAFNPAMNQYIVGNFLDPAQWVANPHDSLTAIFSLGAAFAGAGQDLVVGLTAFLRLIQPSNVQHLWLQLNTTLTSTASLPGLIEIDTRTGQYIFNGGQRTEPYAAPDAILAAIRLVYPAATTSWLTASSTMDWTEYVIGLGSSMSLDDVSTMISYSGLTPILHIDLTQRPMDVPVPLVVGVQAVIHVAAPVQQTTVIGSMAGVQVFTADGVNAPSTIGPLAVVWDPVLSRWDLTITPNQPGVLDVVVDHNGVLLNRGSTTIALPPATIVITFPQAANRDFTNAGNDAAVVCDAFYRLGVFVSVNGAFQPVNPERAAIVTAANARVLHYVYDLSDNHVLMYVCDITDNNIGRNVALPLADIFQTLFPNNTPLLASPPYPSASGRLMLNGQLFVDLDPLPPVLPPGVQIQALSTAIEPARQTAEVPGGAYTYVVV.

This sequence belongs to the aquareoviridae outer capsid VP1 protein family.

It localises to the virion. It carries out the reaction a 5'-end diphospho-ribonucleoside in mRNA + GTP + H(+) = a 5'-end (5'-triphosphoguanosine)-ribonucleoside in mRNA + diphosphate. It catalyses the reaction a 5'-end (5'-triphosphoguanosine)-ribonucleoside in mRNA + S-adenosyl-L-methionine = a 5'-end (N(7)-methyl 5'-triphosphoguanosine)-ribonucleoside in mRNA + S-adenosyl-L-homocysteine. Outer capsid protein involved in mRNA capping. Catalyzes the last 3 enzymatic activities for formation of the 5' cap structure on the viral plus-strand transcripts, namely the RNA guanylyltransferase, RNA-7N- and RNA-2'O-methyltransferase activities. This chain is Outer capsid protein VP1 (S1), found in Oncorhynchus keta (Chum salmon).